A 527-amino-acid chain; its full sequence is UvrABC system protein C (527 aa).

The GIY-YIG domain occupies 9–87 (KNPGCYIYKN…IKKYSPKYNI (79 aa)). The UVR domain occupies 191–226 (DSLIHELKNEMNEKSKNLQFEEALLIREEINAIERL).

It belongs to the UvrC family. As to quaternary structure, interacts with UvrB in an incision complex.

It is found in the cytoplasm. Its function is as follows. The UvrABC repair system catalyzes the recognition and processing of DNA lesions. UvrC both incises the 5' and 3' sides of the lesion. The N-terminal half is responsible for the 3' incision and the C-terminal half is responsible for the 5' incision. The protein is UvrABC system protein C of Methanococcus maripaludis (strain DSM 14266 / JCM 13030 / NBRC 101832 / S2 / LL).